The chain runs to 563 residues: Arginine--tRNA ligase (563 aa).

The 'HIGH' region motif lies at 121–131 (PNIAKPMSMGH).

It belongs to the class-I aminoacyl-tRNA synthetase family. Monomer.

It localises to the cytoplasm. The enzyme catalyses tRNA(Arg) + L-arginine + ATP = L-arginyl-tRNA(Arg) + AMP + diphosphate. This chain is Arginine--tRNA ligase, found in Leuconostoc citreum (strain KM20).